A 140-amino-acid chain; its full sequence is TPT1-like protein (140 aa).

The region spanning 6 to 140 (MITYWDLISH…LANFKNYQKT (135 aa)) is the TCTP domain.

This sequence belongs to the TCTP family.

The sequence is that of TPT1-like protein from Homo sapiens (Human).